A 1260-amino-acid chain; its full sequence is Kinesin-like protein KIN-14E (1260 aa).

The region spanning 115-274 (FQKDPIPTSL…PGREEIEALL (160 aa)) is the MyTH4 domain. Residues 279–593 (LTTIVFFLDE…HINDVMLRRY (315 aa)) enclose the FERM domain. Coiled-coil stretches lie at residues 615–676 (QNFE…LLEV) and 753–853 (SKRL…TAAI). Residues 888–1209 (KIRVYCRIRP…LLYASRVRTI (322 aa)) enclose the Kinesin motor domain. Residue 972–977 (GSGKTF) coordinates ATP. The interval 1217–1239 (ISSKEMVRLKKLVAYWKEQAGKK) is calmodulin-binding. The interval 1221-1260 (EMVRLKKLVAYWKEQAGKKGEEEDLVDIEEDRTRKDEADS) is homodimerization domain. The disordered stretch occupies residues 1236–1260 (AGKKGEEEDLVDIEEDRTRKDEADS). Residues 1251–1260 (DRTRKDEADS) show a composition bias toward basic and acidic residues.

It belongs to the TRAFAC class myosin-kinesin ATPase superfamily. Kinesin family. KIN-14 subfamily. As to quaternary structure, homodimer (via C-terminus). Binds microtubules via its N-terminus containing the MyTH4 domain and binds F-actin via its FERM domain. Interacts with KIPK1. Interacts with KIPK2. Interacts with AN. Interacts with AIR9. Interacts (via C-terminus) with KIC, CAM2, CAM4 and CAM6. KIC and calmodulin show competitive binding to KCBP. Binding to calmodulin inhibits microtubule binding activity. Binding to KIC inhibits microtubule binding activity and microtubule-stimulated ATPase activity. As to expression, widely expressed with the highest levels in flowers. Strongly expressed in the root tip. Highly detected in the branch apex of the trichome.

Its subcellular location is the cytoplasm. The protein resides in the cell cortex. It localises to the cytoskeleton. It is found in the spindle. The protein localises to the phragmoplast. Functionally, minus-end microtubule-dependent motor protein involved in the regulation of cell division and trichome morphogenesis through microtubules bundling. Possesses basal and microtubule-stimulated ATPase activities. Acts as a hub that brings together microtubules and actin filaments to modulate the cytoskeleton during trichome formation and morphogenesis. Could be involved in the negative regulation of root growth. This Arabidopsis thaliana (Mouse-ear cress) protein is Kinesin-like protein KIN-14E.